The chain runs to 297 residues: MPVDKNLRDLEPGIHTDLEGRLTYGGYLRLDQLLSAQQPLSEPAHHDEMLFIIQHQTSELWLKLLAHELRAAIVHLQHDEVWQCRKVLARSKQVLRQLTEQWSVLETLTPSEYMGFRDVLGPSSGFQSLQYRYIEFLLGNKNPQVLQVFAYDPQGRARLREVLEAPSLYEEFLRYLARFGHAIPQQYHARDWTVAHVADDTLRPVFERIYENTDRYWREYALCEDLVDVETQFQLWRFRHMRTVMRVIGFKRGTGGSSGVGFLQQALALTFFPELFDVRTSVGVDSRPPQGAADTQG.

Residues 51–55 (FIIQH), Y113, and R117 contribute to the substrate site. Position 240 (H240) interacts with heme. A substrate-binding site is contributed by T254.

It belongs to the tryptophan 2,3-dioxygenase family. As to quaternary structure, homotetramer. It depends on heme as a cofactor.

The enzyme catalyses L-tryptophan + O2 = N-formyl-L-kynurenine. It participates in amino-acid degradation; L-tryptophan degradation via kynurenine pathway; L-kynurenine from L-tryptophan: step 1/2. In terms of biological role, heme-dependent dioxygenase that catalyzes the oxidative cleavage of the L-tryptophan (L-Trp) pyrrole ring and converts L-tryptophan to N-formyl-L-kynurenine. Catalyzes the oxidative cleavage of the indole moiety. The protein is Tryptophan 2,3-dioxygenase of Xanthomonas oryzae pv. oryzae (strain MAFF 311018).